The following is a 156-amino-acid chain: Small ribosomal subunit protein uS7 (156 aa).

It belongs to the universal ribosomal protein uS7 family. In terms of assembly, part of the 30S ribosomal subunit. Contacts proteins S9 and S11.

One of the primary rRNA binding proteins, it binds directly to 16S rRNA where it nucleates assembly of the head domain of the 30S subunit. Is located at the subunit interface close to the decoding center, probably blocks exit of the E-site tRNA. This chain is Small ribosomal subunit protein uS7, found in Geobacter metallireducens (strain ATCC 53774 / DSM 7210 / GS-15).